The chain runs to 383 residues: MSKRDYYEVLGVAKTASESELKVAFRKLAMVHHPDRNPGDKEAEIKFKEVNEAYQCLSDGEKRAAYDRFGHAAFSQGGAGGPGFGNEFGDFMSDIFENFFGDGRGAPGGGRGRGGAPGRERGADLRYNLEISLEEAFSGKTETIRIPTSIACEACSGTGAKAGSKPRTCSTCGGYGRVRAAQGFFAIERTCPNCHGRGEVVDDPCTACSGAGRVNRERTLSINVPAGVDDGLRIRLAGEGESGLRGGPSGDLYVFLSIKPHPFFQRDGADLFCRVPISMVTAALSGEITVPVIDGSQTQVRIPAGTQTAKQFRIKGKGMPVLRSREVGDLYIQVSVETPQNLTKRQRELLQEFDQSASDENHPESAGFFSKVRDFFVSGATRA.

Residues 5 to 70 (DYYEVLGVAK…EKRAAYDRFG (66 aa)) form the J domain. The segment at 139-217 (GKTETIRIPT…CSGAGRVNRE (79 aa)) adopts a CR-type zinc-finger fold. Residues Cys152, Cys155, Cys169, Cys172, Cys191, Cys194, Cys205, and Cys208 each coordinate Zn(2+). CXXCXGXG motif repeat units follow at residues 152-159 (CEACSGTG), 169-176 (CSTCGGYG), 191-198 (CPNCHGRG), and 205-212 (CTACSGAG).

Belongs to the DnaJ family. Homodimer. The cofactor is Zn(2+).

It is found in the cytoplasm. Functionally, participates actively in the response to hyperosmotic and heat shock by preventing the aggregation of stress-denatured proteins and by disaggregating proteins, also in an autonomous, DnaK-independent fashion. Unfolded proteins bind initially to DnaJ; upon interaction with the DnaJ-bound protein, DnaK hydrolyzes its bound ATP, resulting in the formation of a stable complex. GrpE releases ADP from DnaK; ATP binding to DnaK triggers the release of the substrate protein, thus completing the reaction cycle. Several rounds of ATP-dependent interactions between DnaJ, DnaK and GrpE are required for fully efficient folding. Also involved, together with DnaK and GrpE, in the DNA replication of plasmids through activation of initiation proteins. This chain is Chaperone protein DnaJ, found in Methylorubrum populi (strain ATCC BAA-705 / NCIMB 13946 / BJ001) (Methylobacterium populi).